Consider the following 453-residue polypeptide: Charged multivesicular body protein 7 (453 aa).

Positions methionine 1–proline 22 are disordered. The segment covering alanine 10–proline 22 has biased composition (low complexity). Serine 232 carries the phosphoserine modification. The stretch at glutamine 243 to isoleucine 312 forms a coiled coil. Positions threonine 392–arginine 403 are enriched in basic and acidic residues. Disordered regions lie at residues threonine 392–serine 417 and serine 431–leucine 453. Threonine 408 carries the phosphothreonine modification. A phosphoserine mark is found at serine 410, serine 417, serine 431, and serine 441.

Belongs to the SNF7 family. Interacts with CHMP4B, but not with VPS25. Interacts with LEMD2 (via C-terminus).

Its subcellular location is the cytoplasm. The protein resides in the nucleus envelope. Its function is as follows. ESCRT-III-like protein required to recruit the ESCRT-III complex to the nuclear envelope (NE) during late anaphase. Together with SPAST, the ESCRT-III complex promotes NE sealing and mitotic spindle disassembly during late anaphase. Recruited to the reforming NE during anaphase by LEMD2. Plays a role in the endosomal sorting pathway. In Homo sapiens (Human), this protein is Charged multivesicular body protein 7 (CHMP7).